The following is a 179-amino-acid chain: Large ribosomal subunit protein uL6 (179 aa).

The protein belongs to the universal ribosomal protein uL6 family. In terms of assembly, part of the 50S ribosomal subunit.

Its function is as follows. This protein binds to the 23S rRNA, and is important in its secondary structure. It is located near the subunit interface in the base of the L7/L12 stalk, and near the tRNA binding site of the peptidyltransferase center. This chain is Large ribosomal subunit protein uL6, found in Solidesulfovibrio magneticus (strain ATCC 700980 / DSM 13731 / RS-1) (Desulfovibrio magneticus).